We begin with the raw amino-acid sequence, 217 residues long: ATP synthase subunit a (217 aa).

The next 6 helical transmembrane spans lie at 5–25, 63–83, 89–109, 120–140, 157–177, and 191–213; these read EHVI…LAAG, LIAS…LPFV, NINT…FEGF, FMGP…MSHL, GAIL…TLAV, and LAIV…GAVV.

It belongs to the ATPase A chain family. F-type ATPases have 2 components, CF(1) - the catalytic core - and CF(0) - the membrane proton channel. CF(1) has five subunits: alpha(3), beta(3), gamma(1), delta(1), epsilon(1). CF(0) has three main subunits: a(1), b(2) and c(9-12). The alpha and beta chains form an alternating ring which encloses part of the gamma chain. CF(1) is attached to CF(0) by a central stalk formed by the gamma and epsilon chains, while a peripheral stalk is formed by the delta and b chains.

It localises to the cell inner membrane. Key component of the proton channel; it plays a direct role in the translocation of protons across the membrane. This is ATP synthase subunit a from Hydrogenobaculum sp. (strain Y04AAS1).